A 306-amino-acid chain; its full sequence is ADP-polyphosphate phosphotransferase 2 (306 aa).

This sequence belongs to the polyphosphate kinase 2 (PPK2) family. Class I subfamily.

It catalyses the reaction [phosphate](n) + ATP = [phosphate](n+1) + ADP. The catalysed reaction is [phosphate](n) + GTP = [phosphate](n+1) + GDP. Functionally, uses inorganic polyphosphate (polyP) as a donor to convert ADP to ATP. Can also convert GDP to GTP, with lower efficiency. The chain is ADP-polyphosphate phosphotransferase 2 from Rhizobium meliloti (strain 1021) (Ensifer meliloti).